We begin with the raw amino-acid sequence, 294 residues long: 4-hydroxy-tetrahydrodipicolinate synthase (294 aa).

Thr-44 is a pyruvate binding site. The active-site Proton donor/acceptor is the Tyr-132. Residue Lys-160 is the Schiff-base intermediate with substrate of the active site. Residue Val-202 coordinates pyruvate.

Belongs to the DapA family. In terms of assembly, homotetramer; dimer of dimers.

Its subcellular location is the cytoplasm. The enzyme catalyses L-aspartate 4-semialdehyde + pyruvate = (2S,4S)-4-hydroxy-2,3,4,5-tetrahydrodipicolinate + H2O + H(+). It functions in the pathway amino-acid biosynthesis; L-lysine biosynthesis via DAP pathway; (S)-tetrahydrodipicolinate from L-aspartate: step 3/4. Its function is as follows. Catalyzes the condensation of (S)-aspartate-beta-semialdehyde [(S)-ASA] and pyruvate to 4-hydroxy-tetrahydrodipicolinate (HTPA). This Leptospira borgpetersenii serovar Hardjo-bovis (strain L550) protein is 4-hydroxy-tetrahydrodipicolinate synthase.